The chain runs to 469 residues: uncharacterized protein (469 aa).

Residues 13 to 81 (TPLYEQLYTF…PKIGWFAAEV (69 aa)) form the HTH gntR-type domain. A DNA-binding region (H-T-H motif) is located at residues 41–60 (KRRLSSLLDVSTATIERAYE). Lys-309 is modified (N6-(pyridoxal phosphate)lysine).

It in the C-terminal section; belongs to the class-I pyridoxal-phosphate-dependent aminotransferase family. Pyridoxal 5'-phosphate is required as a cofactor.

This is an uncharacterized protein from Bacillus subtilis (strain 168).